Here is a 372-residue protein sequence, read N- to C-terminus: Glutamate 5-kinase (372 aa).

Position 14 (Lys-14) interacts with ATP. 3 residues coordinate substrate: Ser-54, Asp-141, and Asn-153. 173-174 (TD) is a binding site for ATP. In terms of domain architecture, PUA spans 280–358 (RGRVIIDAGA…SEIESVLGHL (79 aa)).

It belongs to the glutamate 5-kinase family.

Its subcellular location is the cytoplasm. The catalysed reaction is L-glutamate + ATP = L-glutamyl 5-phosphate + ADP. It functions in the pathway amino-acid biosynthesis; L-proline biosynthesis; L-glutamate 5-semialdehyde from L-glutamate: step 1/2. Functionally, catalyzes the transfer of a phosphate group to glutamate to form L-glutamate 5-phosphate. The protein is Glutamate 5-kinase of Cupriavidus metallidurans (strain ATCC 43123 / DSM 2839 / NBRC 102507 / CH34) (Ralstonia metallidurans).